A 393-amino-acid chain; its full sequence is NADH-quinone oxidoreductase subunit D (393 aa).

Belongs to the complex I 49 kDa subunit family. In terms of assembly, NDH-1 is composed of 14 different subunits. Subunits NuoB, C, D, E, F, and G constitute the peripheral sector of the complex.

Its subcellular location is the cell inner membrane. The catalysed reaction is a quinone + NADH + 5 H(+)(in) = a quinol + NAD(+) + 4 H(+)(out). Its function is as follows. NDH-1 shuttles electrons from NADH, via FMN and iron-sulfur (Fe-S) centers, to quinones in the respiratory chain. The immediate electron acceptor for the enzyme in this species is believed to be ubiquinone. Couples the redox reaction to proton translocation (for every two electrons transferred, four hydrogen ions are translocated across the cytoplasmic membrane), and thus conserves the redox energy in a proton gradient. This Ehrlichia ruminantium (strain Gardel) protein is NADH-quinone oxidoreductase subunit D.